The primary structure comprises 218 residues: MAKKSVSVIAAKTAVHAAVLAPIALLGWQFWQVWQQGSDALGADPVAEIEHRTGLWALRLLLITLAITPLRQLTGQAVLIRFRRMLGLYAFFYASVHLTAYLWLDLRGFWTQIFEEIVKRPYITVGFTAWLLLVPLAITSTQGWMRRLKRNWGRLHMLIYPIGLLAVLHFWWLVKSDIREPALYAGILALLLGWRVWKRLSARRTTARHSAPPPATPR.

Transmembrane regions (helical) follow at residues 14 to 34 (AVHA…WQVW), 60 to 80 (LLLI…AVLI), 86 to 106 (LGLY…WLDL), 121 to 141 (PYIT…ITST), and 155 to 175 (LHML…WLVK).

Belongs to the MsrQ family. As to quaternary structure, heterodimer of a catalytic subunit (MsrP) and a heme-binding subunit (MsrQ). Requires FMN as cofactor. Heme b is required as a cofactor.

The protein localises to the cell inner membrane. Part of the MsrPQ system that repairs oxidized periplasmic proteins containing methionine sulfoxide residues (Met-O), using respiratory chain electrons. Thus protects these proteins from oxidative-stress damage caused by reactive species of oxygen and chlorine generated by the host defense mechanisms. MsrPQ is essential for the maintenance of envelope integrity under bleach stress, rescuing a wide series of structurally unrelated periplasmic proteins from methionine oxidation. MsrQ provides electrons for reduction to the reductase catalytic subunit MsrP, using the quinone pool of the respiratory chain. The protein is Protein-methionine-sulfoxide reductase heme-binding subunit MsrQ of Xanthomonas campestris pv. campestris (strain 8004).